We begin with the raw amino-acid sequence, 298 residues long: Lipoyl synthase (298 aa).

The [4Fe-4S] cluster site is built by C40, C45, C51, C67, C71, C74, and S280. The 217-residue stretch at 53–269 (AVRRTATFMI…KEIALSKGFS (217 aa)) folds into the Radical SAM core domain.

It belongs to the radical SAM superfamily. Lipoyl synthase family. It depends on [4Fe-4S] cluster as a cofactor.

The protein localises to the cytoplasm. It carries out the reaction [[Fe-S] cluster scaffold protein carrying a second [4Fe-4S](2+) cluster] + N(6)-octanoyl-L-lysyl-[protein] + 2 oxidized [2Fe-2S]-[ferredoxin] + 2 S-adenosyl-L-methionine + 4 H(+) = [[Fe-S] cluster scaffold protein] + N(6)-[(R)-dihydrolipoyl]-L-lysyl-[protein] + 4 Fe(3+) + 2 hydrogen sulfide + 2 5'-deoxyadenosine + 2 L-methionine + 2 reduced [2Fe-2S]-[ferredoxin]. The protein operates within protein modification; protein lipoylation via endogenous pathway; protein N(6)-(lipoyl)lysine from octanoyl-[acyl-carrier-protein]. Catalyzes the radical-mediated insertion of two sulfur atoms into the C-6 and C-8 positions of the octanoyl moiety bound to the lipoyl domains of lipoate-dependent enzymes, thereby converting the octanoylated domains into lipoylated derivatives. This Geobacillus thermodenitrificans (strain NG80-2) protein is Lipoyl synthase.